Reading from the N-terminus, the 462-residue chain is GTPase HflX (462 aa).

The region spanning 255 to 452 (PAVGIVGYTN…LLEEKIYNLP (198 aa)) is the Hflx-type G domain. Residues 261-268 (GYTNAGKS), 286-290 (FATLD), 308-311 (DTVG), 374-377 (NKID), and 430-432 (SAY) contribute to the GTP site. 2 residues coordinate Mg(2+): Ser-268 and Thr-288.

The protein belongs to the TRAFAC class OBG-HflX-like GTPase superfamily. HflX GTPase family. In terms of assembly, monomer. Associates with the 50S ribosomal subunit. The cofactor is Mg(2+).

It localises to the cytoplasm. GTPase that associates with the 50S ribosomal subunit and may have a role during protein synthesis or ribosome biogenesis. This is GTPase HflX from Leptospira borgpetersenii serovar Hardjo-bovis (strain JB197).